The chain runs to 192 residues: U1 small nuclear ribonucleoprotein C (192 aa).

A Matrin-type zinc finger spans residues 4-36 (YYCEYCDIYLTHSSPVGRRQHNQGRKHISAKIE). The disordered stretch occupies residues 118-192 (PGANKYPNNN…FVNKNSEQPN (75 aa)). Positions 133 to 154 (RISNTPKPYNNYTNKPITNSPY) are enriched in polar residues. Residues 164 to 173 (NNENSNNFSN) are compositionally biased toward low complexity. The segment covering 174-192 (YQMNKDNSNFVNKNSEQPN) has biased composition (polar residues).

The protein belongs to the U1 small nuclear ribonucleoprotein C family. U1 snRNP is composed of the 7 core Sm proteins B/B', D1, D2, D3, E, F and G that assemble in a heptameric protein ring on the Sm site of the small nuclear RNA to form the core snRNP, and at least 3 U1 snRNP-specific proteins U1-70K, U1-A and U1-C. U1-C interacts with U1 snRNA and the 5' splice-site region of the pre-mRNA.

The protein localises to the nucleus. Component of the spliceosomal U1 snRNP, which is essential for recognition of the pre-mRNA 5' splice-site and the subsequent assembly of the spliceosome. U1-C is directly involved in initial 5' splice-site recognition for both constitutive and regulated alternative splicing. The interaction with the 5' splice-site seems to precede base-pairing between the pre-mRNA and the U1 snRNA. Stimulates commitment or early (E) complex formation by stabilizing the base pairing of the 5' end of the U1 snRNA and the 5' splice-site region. The polypeptide is U1 small nuclear ribonucleoprotein C (Plasmodium chabaudi chabaudi).